Reading from the N-terminus, the 176-residue chain is Transcriptional repressor NrdR (176 aa).

The segment at 3 to 34 (CPYCGSLETQVKDSRPTDDASAIRRRRVCPDC) is a zinc-finger region. The region spanning 49–139 (LTVLKKSGRR…VYRNFREARD (91 aa)) is the ATP-cone domain. The interval 147-176 (LDGAAQPEAPSKDDGGTDEPPAKTRAPTRA) is disordered.

Belongs to the NrdR family. Zn(2+) is required as a cofactor.

Its function is as follows. Negatively regulates transcription of bacterial ribonucleotide reductase nrd genes and operons by binding to NrdR-boxes. The sequence is that of Transcriptional repressor NrdR from Methylocella silvestris (strain DSM 15510 / CIP 108128 / LMG 27833 / NCIMB 13906 / BL2).